Here is a 220-residue protein sequence, read N- to C-terminus: Elongation factor Ts, chloroplastic (220 aa).

Belongs to the EF-Ts family.

It is found in the plastid. The protein localises to the chloroplast. Associates with the EF-Tu.GDP complex and induces the exchange of GDP to GTP. It remains bound to the aminoacyl-tRNA.EF-Tu.GTP complex up to the GTP hydrolysis stage on the ribosome. In Pyropia yezoensis (Susabi-nori), this protein is Elongation factor Ts, chloroplastic (tsf).